The following is a 357-amino-acid chain: MKQKELWINQIKGLCICLVVIYHSVITFYPHLTTFQHPLSEVLSKCWIYFNLYLAPFRMPVFFFISGYLIRRYIDSVPWGNCLDKRIWNIFWVLALWGVVQWLALSALNQWLAPERDLSNASNAAYADSTGEFLHGMITASTSLWYLYALIVYFVVCKIFSRLALPLFALFVLLSVAVNFVPTPWWGMNSVIRNLPYYSLGAWFGATIMTCVKEVPLRRHLLMASLLTVLAVGAWLFTISLLLSLVSIVVIMKLFYQYEQRFGMRSTSLLNVIGSNTIAIYTTHRILVEIFSLTLLAQMNAARWSPQVELTLLLVYPFVSLFICTVAGLLVRKLSQRAFSDLLFSPPSLPAAVSYSR.

Over 1–12 (MKQKELWINQIK) the chain is Cytoplasmic. A helical transmembrane segment spans residues 13 to 33 (GLCICLVVIYHSVITFYPHLT). Over 34 to 49 (TFQHPLSEVLSKCWIY) the chain is Periplasmic. A helical transmembrane segment spans residues 50–70 (FNLYLAPFRMPVFFFISGYLI). Over 71 to 86 (RRYIDSVPWGNCLDKR) the chain is Cytoplasmic. A helical membrane pass occupies residues 87 to 107 (IWNIFWVLALWGVVQWLALSA). Residues 108 to 135 (LNQWLAPERDLSNASNAAYADSTGEFLH) are Periplasmic-facing. Residues 136 to 156 (GMITASTSLWYLYALIVYFVV) form a helical membrane-spanning segment. Over 157–162 (CKIFSR) the chain is Cytoplasmic. The chain crosses the membrane as a helical span at residues 163–183 (LALPLFALFVLLSVAVNFVPT). The Periplasmic portion of the chain corresponds to 184 to 196 (PWWGMNSVIRNLP). A helical transmembrane segment spans residues 197–217 (YYSLGAWFGATIMTCVKEVPL). Residues 218–231 (RRHLLMASLLTVLA) lie on the Cytoplasmic side of the membrane. The chain crosses the membrane as a helical span at residues 232–252 (VGAWLFTISLLLSLVSIVVIM). Residues 253–310 (KLFYQYEQRFGMRSTSLLNVIGSNTIAIYTTHRILVEIFSLTLLAQMNAARWSPQVEL) lie on the Periplasmic side of the membrane. Residues 311 to 331 (TLLLVYPFVSLFICTVAGLLV) form a helical membrane-spanning segment. The Cytoplasmic portion of the chain corresponds to 332-357 (RKLSQRAFSDLLFSPPSLPAAVSYSR).

The protein belongs to the acyltransferase 3 family.

The protein resides in the cell inner membrane. The chain is Inner membrane protein YcfT (ycfT) from Escherichia coli (strain K12).